The chain runs to 364 residues: MIRAFDAFSLPLLRLFDAEDAHRLAIQGLRLLPQVKPRPDDPKLAVRAFGLNFPNPVGIAAGFDKNAEAPDALMRLGFGFVEIGTVTPKPQAGNPRPRLFRLERDEAVINRMGFNNDGSEAVLRRLAARAQQGGILGVNVGANKDSSDRVADYVALIETFAPVASYFTVNVSSPNTPGLRNLQQAAALDDLLARVIEARERVRPSAGDTPVLLKIAPDLTLGELDDVVHIARSRKVDGMIVANTTLSRSPLLRERTRMNEQGGLSGRPLFRLSTRMVAETYVRAEGAFPLIGVGGIDSGGAALTKIRAGASLVQLYSALIYKGLGLVESIKTDLASTLLRTGRDSLAEIVGADAPTITAEEWPV.

Residues 61 to 65 (AGFDK) and threonine 85 contribute to the FMN site. Substrate is bound at residue lysine 65. 110-114 (NRMGF) serves as a coordination point for substrate. The FMN site is built by asparagine 139 and asparagine 170. Residue asparagine 170 participates in substrate binding. Serine 173 serves as the catalytic Nucleophile. Asparagine 175 provides a ligand contact to substrate. Residues lysine 214 and alanine 242 each coordinate FMN. A substrate-binding site is contributed by 243–244 (NT). Residues glycine 266, glycine 295, and 316-317 (YS) each bind FMN.

Belongs to the dihydroorotate dehydrogenase family. Type 2 subfamily. As to quaternary structure, monomer. Requires FMN as cofactor.

It localises to the cell membrane. The catalysed reaction is (S)-dihydroorotate + a quinone = orotate + a quinol. Its pathway is pyrimidine metabolism; UMP biosynthesis via de novo pathway; orotate from (S)-dihydroorotate (quinone route): step 1/1. Its function is as follows. Catalyzes the conversion of dihydroorotate to orotate with quinone as electron acceptor. This chain is Dihydroorotate dehydrogenase (quinone), found in Rhodopseudomonas palustris (strain BisB5).